We begin with the raw amino-acid sequence, 348 residues long: Calcium homeostasis modulator protein 1 (348 aa).

At 1–20 (MDKFRMIFQFLQSNQESFMN) the chain is on the cytoplasmic side. Positions 9–36 (QFLQSNQESFMNGICGIMALASAQMYSA) are central pore. A helical membrane pass occupies residues 21–36 (GICGIMALASAQMYSA). The Extracellular portion of the chain corresponds to 37–48 (FDFNCPCLPGYN). Intrachain disulfides connect C41/C126 and C43/C160. A helical transmembrane segment spans residues 49 to 71 (VVYSLGILLTPPLVLFLLGLVMN). Residues 62–69 (VLFLLGLV) are phospholipid-binding. Topologically, residues 72-98 (NNISMLAEEWKRPAGRRAKDPAVLRYM) are cytoplasmic. A helical membrane pass occupies residues 99 to 124 (FCSMAQRALIAPVVWVAVTLLDGKCF). The S-palmitoyl cysteine moiety is linked to residue C100. Positions 104 to 116 (QRALIAPVVWVAV) are phospholipid-binding. At 125-179 (LCAFCTAVPVATLGNGSLVPGLPAPELARLLARVPCPEIYDGNWLLAREVAVRYL) the chain is on the extracellular side. N139 is a glycosylation site (N-linked (GlcNAc...) asparagine). The helical transmembrane segment at 180 to 205 (RCISQALGWSFVLLTTLLAFVVRSVR) threads the bilayer. Positions 191–201 (VLLTTLLAFVV) are phospholipid-binding. Over 206–348 (PCFTQVAFLK…KEVATYFSKV (143 aa)) the chain is Cytoplasmic. A lipid anchor (S-palmitoyl cysteine) is attached at C207. The segment at 324–348 (LMSNGWAGGEPRPPRKEVATYFSKV) is disordered.

Belongs to the CALHM family. In terms of assembly, oligomerizes to form hexamers and octamers. Does not form gap junctions. Associates with CALHM3 as a pore-forming subunit in a hetero-hexameric channel complex. In terms of processing, N-glycosylated. Assembly with CALHM3 is associated with N-glycan remodeling and formation of hybrid complex- and high mannose-type glycochains. This N-glycan processing regulates channel trafficking and gating kinetics. Palmitoylated by ZDHHC3, ZDHHC20 and possibly ZDHHC7. Palmitoylation regulates voltage-dependent gating of the channel by shifting it toward more depolarized potentials. As to expression, specifically expressed in type II taste bud cells (at protein level). Not expressed in brain.

The protein localises to the cell membrane. The protein resides in the endoplasmic reticulum membrane. It is found in the basolateral cell membrane. It catalyses the reaction ATP(in) = ATP(out). The catalysed reaction is Ca(2+)(in) = Ca(2+)(out). It carries out the reaction Mg(2+)(in) = Mg(2+)(out). The enzyme catalyses Na(+)(in) = Na(+)(out). It catalyses the reaction K(+)(in) = K(+)(out). The catalysed reaction is Li(+)(in) = Li(+)(out). It carries out the reaction Rb(+)(in) = Rb(+)(out). The enzyme catalyses Cs(+)(in) = Cs(+)(out). It catalyses the reaction chloride(in) = chloride(out). With respect to regulation, regulated by membrane voltage and extracellular Ca(2+). Inhibited by Gd(3+), ruthenium red, and Zn(2+) and partially inhibited by 2-aminoethoxydiphenyl borate. Its function is as follows. Pore-forming subunit of gustatory voltage-gated ion channels required for sensory perception of sweet, bitter and umami tastes. With CALHM3 forms a fast-activating voltage-gated ATP-release channel in type II taste bud cells, ATP acting as a neurotransmitter to activate afferent neural gustatory pathways. Acts both as a voltage-gated and calcium-activated ion channel: mediates neuronal excitability in response to membrane depolarization and low extracellular Ca(2+) concentration. Has poor ion selectivity and forms a wide pore (around 14 Angstroms) that mediates permeation of small ions including Ca(2+), Na(+), K(+) and Cl(-), as well as larger ions such as ATP(4-). Mediates Ca(2+) influx and downstream activation of the ERK1 and ERK2 cascade in neurons. Triggers endoplasmic reticulum stress by reducing the calcium content of the endoplasmic reticulum. May indirectly control amyloid precursor protein (APP) proteolysis and aggregated amyloid-beta (Abeta) peptides levels in a Ca(2+) dependent manner. This is Calcium homeostasis modulator protein 1 from Mus musculus (Mouse).